The chain runs to 288 residues: Energy-coupling factor transporter ATP-binding protein EcfA2 (288 aa).

One can recognise an ABC transporter domain in the interval 3-245 (IKIENLTHVY…VDTLESVGLA (243 aa)). An ATP-binding site is contributed by 40–47 (GHTGSGKS).

It belongs to the ABC transporter superfamily. Energy-coupling factor EcfA family. In terms of assembly, forms a stable energy-coupling factor (ECF) transporter complex composed of 2 membrane-embedded substrate-binding proteins (S component), 2 ATP-binding proteins (A component) and 2 transmembrane proteins (T component).

The protein localises to the cell membrane. In terms of biological role, ATP-binding (A) component of a common energy-coupling factor (ECF) ABC-transporter complex. Unlike classic ABC transporters this ECF transporter provides the energy necessary to transport a number of different substrates. In Clostridium tetani (strain Massachusetts / E88), this protein is Energy-coupling factor transporter ATP-binding protein EcfA2.